A 337-amino-acid chain; its full sequence is Glyceraldehyde-3-phosphate dehydrogenase 3, cytosolic (337 aa).

A binding to NAD region spans residues 1-151 (MAKIKIGING…YKSDINIVSN (151 aa)). NAD(+) contacts are provided by residues 13-14 (RI), aspartate 35, and arginine 82. A catalytic region spans residues 152 to 337 (ASCTTNCLAP…DLIRHMNSTK (186 aa)). D-glyceraldehyde 3-phosphate-binding positions include 153 to 155 (SCT), threonine 184, 213 to 214 (TG), and arginine 236. Cysteine 154 serves as the catalytic Nucleophile. Position 318 (asparagine 318) interacts with NAD(+).

This sequence belongs to the glyceraldehyde-3-phosphate dehydrogenase family. As to quaternary structure, homotetramer.

It is found in the cytoplasm. The catalysed reaction is D-glyceraldehyde 3-phosphate + phosphate + NAD(+) = (2R)-3-phospho-glyceroyl phosphate + NADH + H(+). It functions in the pathway carbohydrate degradation; glycolysis; pyruvate from D-glyceraldehyde 3-phosphate: step 1/5. Key enzyme in glycolysis that catalyzes the first step of the pathway by converting D-glyceraldehyde 3-phosphate (G3P) into 3-phospho-D-glyceroyl phosphate. Essential for the maintenance of cellular ATP levels and carbohydrate metabolism. The polypeptide is Glyceraldehyde-3-phosphate dehydrogenase 3, cytosolic (GAPC3) (Zea mays (Maize)).